The chain runs to 843 residues: INO80 complex subunit D-B (843 aa).

The span at 159–175 (TLNHKQKQQDHSVDTNH) shows a compositional bias: basic and acidic residues. 5 disordered regions span residues 159–216 (TLNH…PTVR), 221–240 (FKTSSSLQDTHQGSKDSTDN), 503–550 (YHHH…LPQG), 695–726 (SLLHPSEDAFPPSPPSPQPPLTPPSSVGHLTD), and 791–843 (LSTP…TAAP). Polar residues-rich tracts occupy residues 176–187 (LRTSSLPSTLSH), 197–216 (RATQTPINPSSPRAATPTVR), and 221–231 (FKTSSSLQDTH). The segment covering 503-540 (YHHHQQIQRHRPLKKAKPPALSKKHKKKGKRGTQRRPQ) has biased composition (basic residues). Over residues 705 to 717 (PPSPPSPQPPLTP) the composition is skewed to pro residues. Positions 796-821 (QPSSALSALPQSSQTRSTTTSPTSQT) are enriched in low complexity.

Belongs to the INO80D family. In terms of assembly, component of the chromatin-remodeling INO80 complex.

It is found in the nucleus. In terms of biological role, putative regulatory component of the chromatin remodeling INO80 complex which is involved in transcriptional regulation, DNA replication and probably DNA repair. The protein is INO80 complex subunit D-B (ino80db) of Danio rerio (Zebrafish).